Here is a 103-residue protein sequence, read N- to C-terminus: Protein Rev (103 aa).

Residue Ser-5 is modified to Phosphoserine; by host CK2. The tract at residues 17–25 (IIKILYQSN) is homomultimerization. 2 disordered regions span residues 24–49 (SNPC…RRQA) and 82–103 (IRDP…TKDN). The short motif at 33–49 (SRNARKNRRRRWRRRQA) is the Nuclear localization signal and RNA-binding (RRE) element. Over residues 35–48 (NARKNRRRRWRRRQ) the composition is skewed to basic residues. Residues 72 to 83 (VDLPPLEQLNIR) carry the Nuclear export signal and binding to XPO1 motif.

Belongs to the HIV-1 REV protein family. As to quaternary structure, homomultimer; when bound to the RRE. Multimeric assembly is essential for activity and may involve XPO1. Binds to human KPNB1, XPO1, TNPO1, RANBP5 and IPO7. Interacts with the viral Integrase. Interacts with human KHDRBS1. Interacts with human NAP1; this interaction decreases Rev multimerization and stimulates its activity. Interacts with human DEAD-box helicases DDX3 and DDX24; these interactions may serve for viral RNA export to the cytoplasm and packaging, respectively. Interacts with human PSIP1; this interaction may inhibit HIV-1 DNA integration by promoting dissociation of the Integrase-LEDGF/p75 complex. Asymmetrically arginine dimethylated at one site by host PRMT6. Methylation impairs the RNA-binding activity and export of viral RNA from the nucleus to the cytoplasm. In terms of processing, phosphorylated by protein kinase CK2. Presence of, and maybe binding to the N-terminus of the regulatory beta subunit of CK2 is necessary for CK2-mediated Rev's phosphorylation.

The protein resides in the host nucleus. It is found in the host nucleolus. The protein localises to the host cytoplasm. Escorts unspliced or incompletely spliced viral pre-mRNAs (late transcripts) out of the nucleus of infected cells. These pre-mRNAs carry a recognition sequence called Rev responsive element (RRE) located in the env gene, that is not present in fully spliced viral mRNAs (early transcripts). This function is essential since most viral proteins are translated from unspliced or partially spliced pre-mRNAs which cannot exit the nucleus by the pathway used by fully processed cellular mRNAs. Rev itself is translated from a fully spliced mRNA that readily exits the nucleus. Rev's nuclear localization signal (NLS) binds directly to KPNB1/Importin beta-1 without previous binding to KPNA1/Importin alpha-1. KPNB1 binds to the GDP bound form of RAN (Ran-GDP) and targets Rev to the nucleus. In the nucleus, the conversion from Ran-GDP to Ran-GTP dissociates Rev from KPNB1 and allows Rev's binding to the RRE in viral pre-mRNAs. Rev multimerization on the RRE via cooperative assembly exposes its nuclear export signal (NES) to the surface. Rev can then form a complex with XPO1/CRM1 and Ran-GTP, leading to nuclear export of the complex. Conversion from Ran-GTP to Ran-GDP mediates dissociation of the Rev/RRE/XPO1/RAN complex, so that Rev can return to the nucleus for a subsequent round of export. Beside KPNB1, also seems to interact with TNPO1/Transportin-1, RANBP5/IPO5 and IPO7/RANBP7 for nuclear import. The nucleoporin-like HRB/RIP is an essential cofactor that probably indirectly interacts with Rev to release HIV RNAs from the perinuclear region to the cytoplasm. The polypeptide is Protein Rev (Human immunodeficiency virus type 1 group O (isolate MVP5180) (HIV-1)).